The chain runs to 718 residues: Phenylalanine--tRNA ligase beta subunit (718 aa).

The tRNA-binding domain occupies 39 to 153 (LNEISGIKFG…IFDLESNPLK (115 aa)). Positions 386-460 (SKKTFLDLNY…RFYGLEKLKD (75 aa)) constitute a B5 domain. Mg(2+)-binding residues include aspartate 438, aspartate 444, and aspartate 448.

This sequence belongs to the phenylalanyl-tRNA synthetase beta subunit family. Type 1 subfamily. As to quaternary structure, tetramer of two alpha and two beta subunits. It depends on Mg(2+) as a cofactor.

It localises to the cytoplasm. The enzyme catalyses tRNA(Phe) + L-phenylalanine + ATP = L-phenylalanyl-tRNA(Phe) + AMP + diphosphate + H(+). This Mesomycoplasma hyopneumoniae (strain J / ATCC 25934 / NCTC 10110) (Mycoplasma hyopneumoniae) protein is Phenylalanine--tRNA ligase beta subunit.